Reading from the N-terminus, the 316-residue chain is Acetaldehyde dehydrogenase (316 aa).

11–14 (SGNI) contributes to the NAD(+) binding site. The active-site Acyl-thioester intermediate is the Cys-131. Residues 162-170 (SAGPGTRAN) and Asn-289 contribute to the NAD(+) site.

The protein belongs to the acetaldehyde dehydrogenase family. In terms of assembly, interacts with MhpE.

It carries out the reaction acetaldehyde + NAD(+) + CoA = acetyl-CoA + NADH + H(+). It functions in the pathway aromatic compound metabolism; 3-phenylpropanoate degradation. Its function is as follows. Catalyzes the conversion of acetaldehyde to acetyl-CoA, using NAD(+) and coenzyme A. Is the final enzyme in the meta-cleavage pathway for the degradation of aromatic compounds. The polypeptide is Acetaldehyde dehydrogenase (Shigella sonnei (strain Ss046)).